A 748-amino-acid polypeptide reads, in one-letter code: Bifunctional lysine-specific demethylase and histidyl-hydroxylase NO66 (748 aa).

Disordered stretches follow at residues 65–135 and 160–264; these read NIDR…RSTY and TEVV…DDEG. Positions 94 to 110 are enriched in basic and acidic residues; sequence LENKKPKVEVKKEDEKS. The segment covering 124-134 has biased composition (polar residues); that stretch reads LVQNETSTRST. Residues 163–193 show a composition bias toward acidic residues; the sequence is VESDDEQMIGLDSDEELEDEDETDIDEDEMM. Positions 194 to 203 are enriched in basic and acidic residues; that stretch reads IDPKDIERYI. Acidic residues predominate over residues 207 to 264; that stretch reads SVEDEEDMEDEEIEDEEFEDEEFEDEEEEADEQEEEEEDVSDEESVVSEMDADSDDEG. Positions 399–543 constitute a JmjC domain; sequence QLVNPQTYDD…NLMEKVVPEA (145 aa). Fe cation-binding residues include H442, D444, and H509.

This sequence belongs to the ROX family. NO66 subfamily. Fe(2+) serves as cofactor.

The protein resides in the nucleus. The catalysed reaction is N(6),N(6)-dimethyl-L-lysyl(36)-[histone H3] + 2 2-oxoglutarate + 2 O2 = L-lysyl(36)-[histone H3] + 2 formaldehyde + 2 succinate + 2 CO2. Oxygenase that can act as both a histone lysine demethylase and a ribosomal histidine hydroxylase. Specifically demethylates 'Lys-4' (H3K4me) and 'Lys-36' (H3K36me) of histone H3, thereby playing a central role in histone code. Mediates response to multiple stress stimuli, including heat shock and osmotic, oxidative, and ethanol stress. The chain is Bifunctional lysine-specific demethylase and histidyl-hydroxylase NO66 (jmjc-1) from Caenorhabditis elegans.